Here is a 402-residue protein sequence, read N- to C-terminus: S-adenosylmethionine synthase (402 aa).

An ATP-binding site is contributed by His-16. A Mg(2+)-binding site is contributed by Asp-18. Glu-44 is a binding site for K(+). L-methionine-binding residues include Glu-57 and Gln-103. Residues 103–113 (QSPDIAQGVDT) are flexible loop. Residues 178 to 180 (DGK), 249 to 250 (KF), Asp-258, 264 to 265 (RK), Ala-281, and Lys-285 each bind ATP. Asp-258 provides a ligand contact to L-methionine. Lys-289 is a binding site for L-methionine.

This sequence belongs to the AdoMet synthase family. As to quaternary structure, homotetramer; dimer of dimers. Requires Mg(2+) as cofactor. The cofactor is K(+).

The protein localises to the cytoplasm. The catalysed reaction is L-methionine + ATP + H2O = S-adenosyl-L-methionine + phosphate + diphosphate. It functions in the pathway amino-acid biosynthesis; S-adenosyl-L-methionine biosynthesis; S-adenosyl-L-methionine from L-methionine: step 1/1. Functionally, catalyzes the formation of S-adenosylmethionine (AdoMet) from methionine and ATP. The overall synthetic reaction is composed of two sequential steps, AdoMet formation and the subsequent tripolyphosphate hydrolysis which occurs prior to release of AdoMet from the enzyme. This is S-adenosylmethionine synthase from Mycolicibacterium vanbaalenii (strain DSM 7251 / JCM 13017 / BCRC 16820 / KCTC 9966 / NRRL B-24157 / PYR-1) (Mycobacterium vanbaalenii).